A 4924-amino-acid chain; its full sequence is Hydroxamate-type ferrichrome siderophore peptide synthetase (4924 aa).

4 Carrier domains span residues 715-791 (NQSE…ILLK), 2172-2246 (DGFQ…KRRR), 3254-3328 (NVVE…NTQT), and 4402-4478 (IHLN…QYEK). 4 positions are modified to O-(pantetheine 4'-phosphoryl)serine: serine 752, serine 2206, serine 3288, and serine 4439.

This sequence belongs to the ATP-dependent AMP-binding enzyme family.

Its subcellular location is the cytoplasm. In terms of biological role, involved in intracellular and extracellular ferrichrome siderophore biosynthesis. The polypeptide is Hydroxamate-type ferrichrome siderophore peptide synthetase (sib1) (Schizosaccharomyces pombe (strain 972 / ATCC 24843) (Fission yeast)).